The sequence spans 473 residues: L-seryl-tRNA(Sec) selenium transferase (473 aa).

An N6-(pyridoxal phosphate)lysine modification is found at K302.

Belongs to the SelA family. Pyridoxal 5'-phosphate is required as a cofactor.

It is found in the cytoplasm. It carries out the reaction L-seryl-tRNA(Sec) + selenophosphate + H(+) = L-selenocysteinyl-tRNA(Sec) + phosphate. It functions in the pathway aminoacyl-tRNA biosynthesis; selenocysteinyl-tRNA(Sec) biosynthesis; selenocysteinyl-tRNA(Sec) from L-seryl-tRNA(Sec) (bacterial route): step 1/1. Converts seryl-tRNA(Sec) to selenocysteinyl-tRNA(Sec) required for selenoprotein biosynthesis. The sequence is that of L-seryl-tRNA(Sec) selenium transferase from Shewanella oneidensis (strain ATCC 700550 / JCM 31522 / CIP 106686 / LMG 19005 / NCIMB 14063 / MR-1).